A 317-amino-acid polypeptide reads, in one-letter code: Hydroxyacyl-CoA dehydrogenase ChsB1 (317 aa).

Leu-32, Asp-51, Asp-82, Ile-83, Asn-108, Ser-168, Tyr-181, Lys-185, and Thr-215 together coordinate NAD(+). Catalysis depends on residues Ser-168, Tyr-181, and Lys-185.

It belongs to the short-chain dehydrogenases/reductases (SDR) family. In terms of assembly, homodimer, with 1 active site on each face.

The enzyme catalyses (22S)-hydroxy-3-oxo-chol-4-ene-24-oyl-CoA + NAD(+) = 3,22-dioxochol-4-en-24-oyl-CoA + NADH + H(+). The protein operates within steroid metabolism; cholesterol degradation. In terms of biological role, a reversible dehydrogenase involved in cholesterol side-chain degradation. Catalyzes the oxidation of hydroxyl-cholesterol-CoA ester metabolic intermediate (22S)-HOCO-CoA (3-oxo-chol-4-ene-(22S)-hydroxy-24-oyl-CoA), the product of ChsH3, has no activity on (22R)-HOCO-CoA (the product of EchA19). Also acts on (3R)-hydroxyoctanoyl-CoA and 17-beta-hydroxyandrost-4-en-3-one, but not on 7-alpha-hydroxyandrost-4-en-3-one, uses NAD(+) but not NADP(+). The chain is Hydroxyacyl-CoA dehydrogenase ChsB1 from Mycobacterium tuberculosis (strain ATCC 25618 / H37Rv).